The following is a 284-amino-acid chain: Putative L-ribulose-5-phosphate 3-epimerase UlaE (284 aa).

The protein belongs to the L-ribulose-5-phosphate 3-epimerase family.

The catalysed reaction is L-ribulose 5-phosphate = L-xylulose 5-phosphate. Its pathway is cofactor degradation; L-ascorbate degradation; D-xylulose 5-phosphate from L-ascorbate: step 3/4. In terms of biological role, catalyzes the isomerization of L-xylulose-5-phosphate to L-ribulose-5-phosphate. Is involved in the anaerobic L-ascorbate utilization. This is Putative L-ribulose-5-phosphate 3-epimerase UlaE from Shigella dysenteriae serotype 1 (strain Sd197).